The sequence spans 316 residues: Olfactory receptor 2AG1 (316 aa).

Residues 1-25 (MELWNFTLGSGFILVGILNDSGSPE) lie on the Extracellular side of the membrane. N-linked (GlcNAc...) asparagine glycosylation is found at asparagine 5 and asparagine 19. The helical transmembrane segment at 26–49 (LLCATITILYLLALISNGLLLLAI) threads the bilayer. The Cytoplasmic segment spans residues 50-57 (TMEARLHM). The helical transmembrane segment at 58 to 79 (PMYLLLGQLSLMDLLFTSVVTP) threads the bilayer. Residues 80–100 (KALADFLRRENTISFGGCALQ) are Extracellular-facing. A disulfide bond links cysteine 97 and cysteine 189. Residues 101 to 120 (MFLALTMGGAEDLLLAFMAY) traverse the membrane as a helical segment. Residues 121 to 139 (DRYVAICHPLTYMTLMSSR) lie on the Cytoplasmic side of the membrane. A helical transmembrane segment spans residues 140-158 (ACWLMVATSWILASLSALI). Residues 159-195 (YTVYTMHYPFCRAQEIRHLLCEIPHLLKVACADTSRY) are Extracellular-facing. A helical membrane pass occupies residues 196–219 (ELMVYVMGVTFLIPSLAAILASYT). Topologically, residues 220–236 (QILLTVLHMPSNEGRKK) are cytoplasmic. The helical transmembrane segment at 237–259 (ALVTCSSHLTVVGMFYGAATFMY) threads the bilayer. Topologically, residues 260–272 (VLPSSFHSTRQDN) are extracellular. A helical transmembrane segment spans residues 273 to 292 (IISVFYTIVTPALNPLIYSL). At 293–316 (RNKEVMRALRRVLGKYMLPAHSTL) the chain is on the cytoplasmic side.

It belongs to the G-protein coupled receptor 1 family.

It localises to the cell membrane. Odorant receptor. In Homo sapiens (Human), this protein is Olfactory receptor 2AG1 (OR2AG1).